We begin with the raw amino-acid sequence, 73 residues long: Toxin Td12 (73 aa).

The N-terminal stretch at 1-7 (IGMVIEC) is a signal peptide. An LCN-type CS-alpha/beta domain is found at 8 to 70 (KDGYLMEPNG…TWDRATNTCG (63 aa)). Cystine bridges form between C18–C69, C22–C44, C30–C50, and C34–C52. The residue at position 71 (R71) is an Arginine amide.

The protein belongs to the long (4 C-C) scorpion toxin superfamily. Sodium channel inhibitor family. Beta subfamily. In terms of tissue distribution, expressed by the venom gland.

The protein resides in the secreted. Its function is as follows. Beta toxins bind voltage-independently at site-4 of sodium channels (Nav) and shift the voltage of activation toward more negative potentials thereby affecting sodium channel activation and promoting spontaneous and repetitive firing. This Tityus discrepans (Venezuelan scorpion) protein is Toxin Td12.